The chain runs to 140 residues: Large ribosomal subunit protein uL16 (140 aa).

Belongs to the universal ribosomal protein uL16 family. As to quaternary structure, part of the 50S ribosomal subunit.

Its function is as follows. Binds 23S rRNA and is also seen to make contacts with the A and possibly P site tRNAs. The protein is Large ribosomal subunit protein uL16 of Amoebophilus asiaticus (strain 5a2).